The sequence spans 208 residues: Large ribosomal subunit protein uL3 (208 aa).

The disordered stretch occupies residues 116–148 (GFQGVIKRHGQSRGPMAHGSRYHRRPGSMGPVA).

It belongs to the universal ribosomal protein uL3 family. In terms of assembly, part of the 50S ribosomal subunit. Forms a cluster with proteins L14 and L19.

In terms of biological role, one of the primary rRNA binding proteins, it binds directly near the 3'-end of the 23S rRNA, where it nucleates assembly of the 50S subunit. This Streptococcus pyogenes serotype M6 (strain ATCC BAA-946 / MGAS10394) protein is Large ribosomal subunit protein uL3.